The sequence spans 118 residues: NADH-quinone oxidoreductase subunit A 1 (118 aa).

The next 3 membrane-spanning stretches (helical) occupy residues 1–21, 60–80, and 87–107; these read MLGVYLPIIVLVAVAVIFGLA, FYIIAMLFILFDIEAVFMYPW, and LGIFGVVEMGLFIVILFVGYI.

It belongs to the complex I subunit 3 family. In terms of assembly, NDH-1 is composed of 14 different subunits. Subunits NuoA, H, J, K, L, M, N constitute the membrane sector of the complex.

Its subcellular location is the cell inner membrane. It carries out the reaction a quinone + NADH + 5 H(+)(in) = a quinol + NAD(+) + 4 H(+)(out). Its function is as follows. NDH-1 shuttles electrons from NADH, via FMN and iron-sulfur (Fe-S) centers, to quinones in the respiratory chain. The immediate electron acceptor for the enzyme in this species is believed to be ubiquinone. Couples the redox reaction to proton translocation (for every two electrons transferred, four hydrogen ions are translocated across the cytoplasmic membrane), and thus conserves the redox energy in a proton gradient. The polypeptide is NADH-quinone oxidoreductase subunit A 1 (Geobacter sulfurreducens (strain ATCC 51573 / DSM 12127 / PCA)).